We begin with the raw amino-acid sequence, 445 residues long: Trigger factor (445 aa).

A PPIase FKBP-type domain is found at 162 to 247; it reads GDQVTIDAIG…IKAVHTAEPT (86 aa).

The protein belongs to the FKBP-type PPIase family. Tig subfamily.

The protein localises to the cytoplasm. It catalyses the reaction [protein]-peptidylproline (omega=180) = [protein]-peptidylproline (omega=0). Its function is as follows. Involved in protein export. Acts as a chaperone by maintaining the newly synthesized protein in an open conformation. Functions as a peptidyl-prolyl cis-trans isomerase. The polypeptide is Trigger factor (tig) (Rickettsia prowazekii (strain Madrid E)).